Reading from the N-terminus, the 602-residue chain is Adenylosuccinate synthetase (602 aa).

GTP contacts are provided by residues 74-80 (GDEGKGK) and 104-106 (GHT). The Proton acceptor role is filled by aspartate 75. 2 residues coordinate Mg(2+): aspartate 75 and glycine 104. Residues 75 to 78 (DEGK), 102 to 105 (NAGH), threonine 189, lysine 203, glutamine 315, threonine 331, and lysine 459 contribute to the IMP site. Residue histidine 105 is the Proton donor of the active site. Residue 455 to 461 (AVTKKPR) participates in substrate binding. Residues arginine 461 and 589-591 (GNG) each bind GTP.

The protein belongs to the adenylosuccinate synthetase family. Homodimer. The cofactor is Mg(2+).

Its subcellular location is the cytoplasm. The catalysed reaction is IMP + L-aspartate + GTP = N(6)-(1,2-dicarboxyethyl)-AMP + GDP + phosphate + 2 H(+). The protein operates within purine metabolism; AMP biosynthesis via de novo pathway; AMP from IMP: step 1/2. Functionally, plays an important role in the salvage pathway for purine nucleotide biosynthesis. Catalyzes the first committed step in the biosynthesis of AMP from IMP. The protein is Adenylosuccinate synthetase of Trypanosoma brucei gambiense (strain MHOM/CI/86/DAL972).